A 282-amino-acid polypeptide reads, in one-letter code: MYQRLAFALVFLIIAGFVSFQVIFTVPEQPQIITQTGTNITQDIRCMEFKQPQVLDKDGELNVLVWNIYKQNRDNWQQALDAFSANKQLLLLQEASLTDEFKNWLVDGHWVSNQVSAFKALGSGAGVISIAQKEPIRACAYTSKEPWLRLPKSALYSKYQLSNGETLAVVNIHAINFTVGTEEYTSQLSVLEKVLKEHKGPILFAGDFNSWSEERLTAMKKALQKANLQEVTFSQDNRTQFITGLPLDHVFYRGLTLKNAKAPQSDASDHNPLLVSFTLNDQ.

It belongs to the UPF0294 family.

It is found in the cytoplasm. The polypeptide is UPF0294 protein VIBHAR_03217 (Vibrio campbellii (strain ATCC BAA-1116)).